An 85-amino-acid polypeptide reads, in one-letter code: uncharacterized protein (85 aa).

Disordered stretches follow at residues 1 to 28 (MPQKPLKVTKKAKDPRRVTKKQKNLRKA) and 35 to 54 (SKKKSLQHLKKLKKSSSLTE). The segment covering 35–48 (SKKKSLQHLKKLKK) has biased composition (basic residues).

The protein localises to the nucleus. This is an uncharacterized protein from Saccharomyces cerevisiae (strain ATCC 204508 / S288c) (Baker's yeast).